The sequence spans 178 residues: 2-C-methyl-D-erythritol 2,4-cyclodiphosphate synthase (178 aa).

A divalent metal cation-binding residues include Asp24, His26, and His61. A 4-CDP-2-C-methyl-D-erythritol 2-phosphate-binding site is contributed by 24 to 26 (DSH). 150–153 (TSGE) contacts 4-CDP-2-C-methyl-D-erythritol 2-phosphate.

The protein belongs to the IspF family. In terms of assembly, homotrimer. A divalent metal cation is required as a cofactor.

It catalyses the reaction 4-CDP-2-C-methyl-D-erythritol 2-phosphate = 2-C-methyl-D-erythritol 2,4-cyclic diphosphate + CMP. It participates in isoprenoid biosynthesis; isopentenyl diphosphate biosynthesis via DXP pathway; isopentenyl diphosphate from 1-deoxy-D-xylulose 5-phosphate: step 4/6. Involved in the biosynthesis of isopentenyl diphosphate (IPP) and dimethylallyl diphosphate (DMAPP), two major building blocks of isoprenoid compounds. Catalyzes the conversion of 4-diphosphocytidyl-2-C-methyl-D-erythritol 2-phosphate (CDP-ME2P) to 2-C-methyl-D-erythritol 2,4-cyclodiphosphate (ME-CPP) with a corresponding release of cytidine 5-monophosphate (CMP). This is 2-C-methyl-D-erythritol 2,4-cyclodiphosphate synthase from Chlamydia muridarum (strain MoPn / Nigg).